The sequence spans 250 residues: 2,5-dichloro-2,5-cyclohexadiene-1,4-diol dehydrogenase LinX (250 aa).

The NAD(+) site is built by Asp38, Asp64, Val65, Tyr156, Lys160, Thr191, and Thr194. The active-site Proton acceptor is the Tyr156.

This sequence belongs to the short-chain dehydrogenases/reductases (SDR) family.

The enzyme catalyses 2,5-dichlorocyclohexa-2,5-dien-1,4-diol + NAD(+) = 2,5-dichlorohydroquinone + NADH + H(+). Its function is as follows. Catalyzes the degradation of 2,5-dichloro-2,5-cyclohexadiene-1,4-diol (2,5-DDOL) into 2,5-dichlorohydroquinone (2,5-DCHQ) in vitro. LinX appears not to be involved in gamma-hexachlorocyclohexane (gamma-HCH) degradation pathway, in contrast to LinC which has the same enzymatic activity. This Sphingobium indicum (strain DSM 16412 / CCM 7286 / MTCC 6364 / B90A) protein is 2,5-dichloro-2,5-cyclohexadiene-1,4-diol dehydrogenase LinX.